Here is a 348-residue protein sequence, read N- to C-terminus: UDP-glucose 4-epimerase (348 aa).

Residues 12–14 (GYI), 33–37 (DNFHN), 66–67 (DI), F88, and K92 each bind NAD(+). Substrate is bound at residue 132-134 (SAT). Catalysis depends on Y157, which acts as the Proton acceptor. NAD(+) contacts are provided by K161 and Y185. Substrate contacts are provided by residues 185-187 (YFN), 206-208 (NNL), 224-226 (NVF), R239, and 300-303 (REGD).

It belongs to the NAD(P)-dependent epimerase/dehydratase family. As to quaternary structure, homodimer. It depends on NAD(+) as a cofactor.

It catalyses the reaction UDP-alpha-D-glucose = UDP-alpha-D-galactose. It carries out the reaction UDP-N-acetyl-alpha-D-glucosamine = UDP-N-acetyl-alpha-D-galactosamine. It participates in carbohydrate metabolism; galactose metabolism. Functionally, catalyzes two distinct but analogous reactions: the reversible epimerization of UDP-glucose to UDP-galactose and the reversible epimerization of UDP-N-acetylglucosamine to UDP-N-acetylgalactosamine. The reaction with UDP-Gal plays a critical role in the Leloir pathway of galactose catabolism in which galactose is converted to the glycolytic intermediate glucose 6-phosphate. It contributes to the catabolism of dietary galactose and enables the endogenous biosynthesis of both UDP-Gal and UDP-GalNAc when exogenous sources are limited. Both UDP-sugar interconversions are important in the synthesis of glycoproteins and glycolipids. This chain is UDP-glucose 4-epimerase, found in Bos taurus (Bovine).